A 124-amino-acid chain; its full sequence is Apolipoprotein C-IV (124 aa).

An N-terminal signal peptide occupies residues 1–27 (MSLLRCRPRDLPSVSLSVLFLVSFVAS). N-linked (GlcNAc...) asparagine glycosylation occurs at asparagine 107.

It belongs to the apolipoprotein C4 family. Expressed by the liver and secreted in plasma.

The protein resides in the secreted. In terms of biological role, may participate in lipoprotein metabolism. This Mus musculus (Mouse) protein is Apolipoprotein C-IV (Apoc4).